Here is a 363-residue protein sequence, read N- to C-terminus: Pyrimidine monooxygenase RutA (363 aa).

FMN-binding positions include 49-50 (IK), Asn-115, Glu-124, 140-141 (RY), and Ser-190.

The protein belongs to the NtaA/SnaA/DszA monooxygenase family. RutA subfamily.

It carries out the reaction uracil + FMNH2 + NADH + O2 = (Z)-3-ureidoacrylate + FMN + NAD(+) + H2O + H(+). It catalyses the reaction thymine + FMNH2 + NADH + O2 = (Z)-2-methylureidoacrylate + FMN + NAD(+) + H2O + H(+). Its function is as follows. Catalyzes the pyrimidine ring opening between N-3 and C-4 by an unusual flavin hydroperoxide-catalyzed mechanism, adding oxygen atoms in the process to yield ureidoacrylate peracid, that immediately reacts with FMN forming ureidoacrylate and FMN-N(5)-oxide. The FMN-N(5)-oxide reacts spontaneously with NADH to produce FMN. Requires the flavin reductase RutF to regenerate FMN in vivo. This Enterobacter sp. (strain 638) protein is Pyrimidine monooxygenase RutA.